Here is a 185-residue protein sequence, read N- to C-terminus: Elongation factor P (185 aa).

This sequence belongs to the elongation factor P family.

It localises to the cytoplasm. It participates in protein biosynthesis; polypeptide chain elongation. Functionally, involved in peptide bond synthesis. Stimulates efficient translation and peptide-bond synthesis on native or reconstituted 70S ribosomes in vitro. Probably functions indirectly by altering the affinity of the ribosome for aminoacyl-tRNA, thus increasing their reactivity as acceptors for peptidyl transferase. The chain is Elongation factor P from Geobacillus sp. (strain WCH70).